Reading from the N-terminus, the 590-residue chain is Potassium-transporting ATPase potassium-binding subunit (590 aa).

The next 12 membrane-spanning stretches (helical) occupy residues Ala-3–Gly-23, His-63–Gln-83, Gly-134–Ile-154, Val-177–Ile-197, Phe-284–Met-304, Trp-312–Ala-332, Phe-359–Val-379, Ala-388–Val-408, Gly-411–Gly-431, Ile-451–Thr-471, Leu-515–Met-535, and Leu-558–Ala-578.

Belongs to the KdpA family. As to quaternary structure, the system is composed of three essential subunits: KdpA, KdpB and KdpC.

Its subcellular location is the cell inner membrane. Functionally, part of the high-affinity ATP-driven potassium transport (or Kdp) system, which catalyzes the hydrolysis of ATP coupled with the electrogenic transport of potassium into the cytoplasm. This subunit binds the periplasmic potassium ions and delivers the ions to the membrane domain of KdpB through an intramembrane tunnel. The chain is Potassium-transporting ATPase potassium-binding subunit from Ralstonia pickettii (strain 12J).